A 1199-amino-acid chain; its full sequence is Metabotropic glutamate receptor 1 (1199 aa).

The signal sequence occupies residues 1-20 (MVRLLLIFFPMIFLEMSILP). Over 21 to 592 (RMPDRKVLLA…IRYLEWSDIE (572 aa)) the chain is Extracellular. A disulfide bridge links C67 with C109. L-glutamate is bound at residue Y74. An N-linked (GlcNAc...) asparagine glycan is attached at N98. Residues S165 and 186–188 (SAT) each bind L-glutamate. A glycan (N-linked (GlcNAc...) asparagine) is linked at N223. Position 236 (Y236) interacts with L-glutamate. A disulfide bond links C289 and C291. Residue D318 participates in L-glutamate binding. Residues C378 and C394 are joined by a disulfide bond. The N-linked (GlcNAc...) asparagine glycan is linked to N397. K409 lines the L-glutamate pocket. An intrachain disulfide couples C432 to C439. N-linked (GlcNAc...) asparagine glycosylation occurs at N515. The chain crosses the membrane as a helical span at residues 593-615 (SIIAIAFSCLGILVTLFVTLIFV). At 616–629 (LYRDTPVVKSSSRE) the chain is on the cytoplasmic side. The chain crosses the membrane as a helical span at residues 630–650 (LCYIILAGIFLGYVCPFTLIA). At 651 to 658 (KPTTTSCY) the chain is on the extracellular side. Cysteines 657 and 746 form a disulfide. A helical membrane pass occupies residues 659-680 (LQRLLVGLSSAMCYSALVTKTN). The Cytoplasmic segment spans residues 681-703 (RIARILAGSKKKICTRKPRFMSA). Residues 704–727 (WAQVIIASILISVQLTLVVTLIIM) traverse the membrane as a helical segment. The Extracellular portion of the chain corresponds to 728-750 (EPPMPILSYPSIKEVYLICNTSN). A glycan (N-linked (GlcNAc...) asparagine) is linked at N747. The helical transmembrane segment at 751–772 (LGVVAPVGYNGLLIMSCTYYAF) threads the bilayer. At 773–785 (KTRNVPANFNEAK) the chain is on the cytoplasmic side. The chain crosses the membrane as a helical span at residues 786–807 (YIAFTMYTTCIIWLAFVPIYFG). At 808–815 (SNYKIITT) the chain is on the extracellular side. The helical transmembrane segment at 816-840 (CFAVSLSVTVALGCMFTPKMYIIIA) threads the bilayer. Over 841 to 1199 (KPERNVRSAF…RDYKQSSSTL (359 aa)) the chain is Cytoplasmic. S853 is subject to Phosphoserine. Phosphothreonine is present on T871. 3 disordered regions span residues 882–906 (GAGN…APKG), 959–1035 (EEDN…QPKS), and 1055–1082 (HAVL…QHLQ). The span at 885–895 (NANSNGKSVSW) shows a compositional bias: polar residues. A phosphoserine mark is found at S894 and S969. Residues 1012–1032 (GLPPPLPQQQQQPPPQPPPQQ) show a composition bias toward pro residues. S1097 carries the phosphoserine modification. Residues 1118–1177 (VYEREGNTEEDDLEEEEDLPAASKLTPEDSPALTPPSPFRDSVASGSSVPSSPVSESVLC) are disordered. Residues 1125–1136 (TEEDDLEEEEDL) show a composition bias toward acidic residues. Residue S1147 is modified to Phosphoserine. T1151 carries the phosphothreonine modification. Residue S1154 is modified to Phosphoserine. Low complexity predominate over residues 1159–1175 (SVASGSSVPSSPVSESV).

It belongs to the G-protein coupled receptor 3 family. Homodimer; disulfide-linked. The PPXXF motif binds HOMER1, HOMER2 and HOMER3. Interacts with TAMALIN. Interacts with RYR1, RYR2, ITPR1, SHANK1 and SHANK3. Interacts with SHIA1. Expressed in the striatum (at protein level). Expressed in type II unipolar brush cells of the cerebellum (at protein level).

It localises to the cell membrane. The protein localises to the postsynaptic cell membrane. It is found in the cell projection. The protein resides in the dendrite. G-protein coupled receptor for glutamate. Ligand binding causes a conformation change that triggers signaling via guanine nucleotide-binding proteins (G proteins) and modulates the activity of down-stream effectors. Signaling activates a phosphatidylinositol-calcium second messenger system. May participate in the central action of glutamate in the CNS, such as long-term potentiation in the hippocampus and long-term depression in the cerebellum (By. similarity). May function in the light response in the retina. Induces GRID1 and GRID2 cation-channel activation via GNAQ-PLC-PKC pathway in dopaminergic neurons and cerebellar Purkinje cell, respectively. The protein is Metabotropic glutamate receptor 1 (Grm1) of Mus musculus (Mouse).